A 363-amino-acid polypeptide reads, in one-letter code: MGVKDLLSRKTGVIVGDDVLRLFQHAQENVFAIPAIMVTSSSTGSALEAARDKSPIVLQTSNGAAYFAGKGKGVSNDGQSVAGSIAIAAAHYIRSQAPAYGIPVVLHTDHCAKKLLPWLDGMLDADECYSKLHNEPLFSSHMIDLSEESVEWNIETTAKYLKRAAPMKQWLEMEIGITGGEEDGVNNESVDNNSLYTQPEDIYTIYKTLSAISPYFSIAAGFGNVHGVYRGDIALRPLLRHLHNAKYDEQLKCLQDPLGFFVFHGGSGSSHQPATSITSEFAAKGRVDLEKVAYLPGTSSLVIAPKDYLMSPYGIPVVLHTDHCKYFDPRVQIREGLKHMSARVQEAKDDFNDSNQAKKLLPW.

Serine 61 is a binding site for D-glyceraldehyde 3-phosphate. The active-site Proton donor is the aspartate 109. Histidine 110, aspartate 144, glutamate 174, and histidine 226 together coordinate Zn(2+). Residue glycine 227 participates in dihydroxyacetone phosphate binding. Histidine 264 lines the Zn(2+) pocket. 265–267 contributes to the dihydroxyacetone phosphate binding site; the sequence is GGS.

This sequence belongs to the class II fructose-bisphosphate aldolase family. As to quaternary structure, homodimer. The cofactor is Zn(2+).

It carries out the reaction beta-D-fructose 1,6-bisphosphate = D-glyceraldehyde 3-phosphate + dihydroxyacetone phosphate. Its pathway is carbohydrate degradation; glycolysis; D-glyceraldehyde 3-phosphate and glycerone phosphate from D-glucose: step 4/4. Catalyzes the aldol condensation of dihydroxyacetone phosphate (DHAP or glycerone-phosphate) with glyceraldehyde 3-phosphate (G3P) to form fructose 1,6-bisphosphate (FBP) in gluconeogenesis and the reverse reaction in glycolysis. This chain is Fructose-bisphosphate aldolase 2 (FBA2), found in Paracoccidioides lutzii (strain ATCC MYA-826 / Pb01) (Paracoccidioides brasiliensis).